A 717-amino-acid polypeptide reads, in one-letter code: DNA-binding protein RFX2 (717 aa).

The disordered stretch occupies residues 1-28 (MQNSEGGADSPASVALRPAAQPMPASPQ). At Ser-26 the chain carries Phosphoserine. The segment at residues 194 to 269 (HLQWLLDNYE…YHYYGIRLKP (76 aa)) is a DNA-binding region (RFX-type winged-helix). The disordered stretch occupies residues 286 to 318 (RQQPTHQKPRYRPAQKSDSLGDGSAHSNMHGMP). Ser-411 is subject to Phosphoserine. The span at 685–710 (DGHSSEADVDGRSLGEPLVKRERSDP) shows a compositional bias: basic and acidic residues. The interval 685–717 (DGHSSEADVDGRSLGEPLVKRERSDPSHPLQGI) is disordered.

The protein belongs to the RFX family. As to quaternary structure, homodimer; probably only forms homodimers in testis. Heterodimer; heterodimerizes with RFX1 and RFX3.

It localises to the nucleus. The protein resides in the cytoplasm. Functionally, transcription factor that acts as a key regulator of spermatogenesis. Acts by regulating expression of genes required for the haploid phase during spermiogenesis, such as genes required for cilium assembly and function. Recognizes and binds the X-box, a regulatory motif with DNA sequence 5'-GTNRCC(0-3N)RGYAAC-3' present on promoters. Probably activates transcription of the testis-specific histone gene H1-6. The protein is DNA-binding protein RFX2 (Rfx2) of Mus musculus (Mouse).